Reading from the N-terminus, the 215-residue chain is Probable transaldolase (215 aa).

The active-site Schiff-base intermediate with substrate is the Lys-83.

The protein belongs to the transaldolase family. Type 3B subfamily.

It is found in the cytoplasm. It catalyses the reaction D-sedoheptulose 7-phosphate + D-glyceraldehyde 3-phosphate = D-erythrose 4-phosphate + beta-D-fructose 6-phosphate. It participates in carbohydrate degradation; pentose phosphate pathway; D-glyceraldehyde 3-phosphate and beta-D-fructose 6-phosphate from D-ribose 5-phosphate and D-xylulose 5-phosphate (non-oxidative stage): step 2/3. In terms of biological role, transaldolase is important for the balance of metabolites in the pentose-phosphate pathway. This chain is Probable transaldolase (tal), found in Clostridium acetobutylicum (strain ATCC 824 / DSM 792 / JCM 1419 / IAM 19013 / LMG 5710 / NBRC 13948 / NRRL B-527 / VKM B-1787 / 2291 / W).